The following is a 177-amino-acid chain: Large ribosomal subunit protein uL6 (177 aa).

The protein belongs to the universal ribosomal protein uL6 family. In terms of assembly, part of the 50S ribosomal subunit.

Its function is as follows. This protein binds to the 23S rRNA, and is important in its secondary structure. It is located near the subunit interface in the base of the L7/L12 stalk, and near the tRNA binding site of the peptidyltransferase center. In Pseudomonas entomophila (strain L48), this protein is Large ribosomal subunit protein uL6.